Here is a 546-residue protein sequence, read N- to C-terminus: CTP synthase (546 aa).

The segment at 1 to 269 is amidoligase domain; sequence MADTKYIFVT…DKVTLKKLAL (269 aa). Residue serine 15 participates in CTP binding. A UTP-binding site is contributed by serine 15. 16 to 21 serves as a coordination point for ATP; the sequence is SLGKGI. Position 56 (tyrosine 56) interacts with L-glutamine. Aspartate 73 contacts ATP. Residues aspartate 73 and glutamate 143 each coordinate Mg(2+). Residues 150 to 152, 190 to 195, and lysine 226 contribute to the CTP site; these read DIE and KTKPTQ. UTP-binding positions include 190–195 and lysine 226; that span reads KTKPTQ. A Glutamine amidotransferase type-1 domain is found at 295-537; that stretch reads HIGLIGKYVE…VKAAHEHSVK (243 aa). An L-glutamine-binding site is contributed by glycine 357. Cysteine 384 acts as the Nucleophile; for glutamine hydrolysis in catalysis. Residues 385–388, glutamate 408, and arginine 465 contribute to the L-glutamine site; that span reads LGMQ. Residues histidine 510 and glutamate 512 contribute to the active site.

The protein belongs to the CTP synthase family. Homotetramer.

The enzyme catalyses UTP + L-glutamine + ATP + H2O = CTP + L-glutamate + ADP + phosphate + 2 H(+). The catalysed reaction is L-glutamine + H2O = L-glutamate + NH4(+). It catalyses the reaction UTP + NH4(+) + ATP = CTP + ADP + phosphate + 2 H(+). The protein operates within pyrimidine metabolism; CTP biosynthesis via de novo pathway; CTP from UDP: step 2/2. Allosterically activated by GTP, when glutamine is the substrate; GTP has no effect on the reaction when ammonia is the substrate. The allosteric effector GTP functions by stabilizing the protein conformation that binds the tetrahedral intermediate(s) formed during glutamine hydrolysis. Inhibited by the product CTP, via allosteric rather than competitive inhibition. Catalyzes the ATP-dependent amination of UTP to CTP with either L-glutamine or ammonia as the source of nitrogen. Regulates intracellular CTP levels through interactions with the four ribonucleotide triphosphates. The protein is CTP synthase of Christiangramia forsetii (strain DSM 17595 / CGMCC 1.15422 / KT0803) (Gramella forsetii).